The sequence spans 318 residues: 1-phosphofructokinase (318 aa).

ATP contacts are provided by residues 228–233 and 259–260; these read SMGTEG and GD. Asp-260 functions as the Proton acceptor in the catalytic mechanism.

It belongs to the carbohydrate kinase PfkB family.

The enzyme catalyses beta-D-fructose 1-phosphate + ATP = beta-D-fructose 1,6-bisphosphate + ADP + H(+). Functionally, catalyzes the ATP-dependent phosphorylation of fructose-l-phosphate to fructose-l,6-bisphosphate. The protein is 1-phosphofructokinase of Xanthomonas campestris pv. campestris (strain ATCC 33913 / DSM 3586 / NCPPB 528 / LMG 568 / P 25).